The sequence spans 1171 residues: DNA-directed RNA polymerase subunit beta (1171 aa).

It belongs to the RNA polymerase beta chain family. As to quaternary structure, the RNAP catalytic core consists of 2 alpha, 1 beta, 1 beta' and 1 omega subunit. When a sigma factor is associated with the core the holoenzyme is formed, which can initiate transcription.

The catalysed reaction is RNA(n) + a ribonucleoside 5'-triphosphate = RNA(n+1) + diphosphate. Functionally, DNA-dependent RNA polymerase catalyzes the transcription of DNA into RNA using the four ribonucleoside triphosphates as substrates. This Kineococcus radiotolerans (strain ATCC BAA-149 / DSM 14245 / SRS30216) protein is DNA-directed RNA polymerase subunit beta.